We begin with the raw amino-acid sequence, 192 residues long: Protein A16 (192 aa).

Positions 1–22 are cleaved as a signal peptide; it reads MLLANTAAAVLLLIVCIGASVG. One can recognise a C-type lectin domain in the interval 71–186; sequence KNKKFTIGTL…CLNPLNIFPY (116 aa). A disulfide bridge links cysteine 163 with cysteine 177.

In terms of tissue distribution, expressed in the gut of adults.

This chain is Protein A16 (CTL3), found in Anopheles gambiae (African malaria mosquito).